We begin with the raw amino-acid sequence, 87 residues long: Small ribosomal subunit protein bS20 (87 aa).

Residues 1 to 19 (MANHKSALKRHRQSIKRNL) are compositionally biased toward basic residues. Residues 1-22 (MANHKSALKRHRQSIKRNLRNN) are disordered.

Belongs to the bacterial ribosomal protein bS20 family.

In terms of biological role, binds directly to 16S ribosomal RNA. This Maridesulfovibrio salexigens (strain ATCC 14822 / DSM 2638 / NCIMB 8403 / VKM B-1763) (Desulfovibrio salexigens) protein is Small ribosomal subunit protein bS20.